Here is a 105-residue protein sequence, read N- to C-terminus: Small ribosomal subunit protein uS10c (105 aa).

Belongs to the universal ribosomal protein uS10 family. As to quaternary structure, part of the 30S ribosomal subunit.

It localises to the plastid. The protein resides in the chloroplast. Involved in the binding of tRNA to the ribosomes. This chain is Small ribosomal subunit protein uS10c, found in Gracilaria tenuistipitata var. liui (Red alga).